The primary structure comprises 302 residues: MVSSTAGYRSSALGKLKAFISLTKPRQLALLMLTMYGAYFAGGGSLDPRMLALLTIMGFTSIGGVTAFNMYFDRDIDAIMGRTRRRPLPSGVLNPYEALAGSLALVIAGVLSAAAINTYVALTVIAGLYFDIIAYTQLTKRFTPLSIIFGSIAGSMPALGGWAAAAGSITTGGVLMALIVFLWQPMHVWFLGYYFKEEYSVARIPILPSNGNPRLVSSLIAVSLAGLIAVAWAFALYYGYGFLTAVITTVLAALAISRIGGFARTGERREALKLFKFASPIIAVVFIILPLERTLVYTLLLG.

Transmembrane regions (helical) follow at residues 28–48 (LALL…SLDP), 50–70 (MLAL…AFNM), 93–115 (LNPY…SAAA), 119–138 (YVAL…YTQL), 147–167 (IIFG…AAAG), 172–192 (GGVL…WFLG), 219–239 (LIAV…LYYG), 242–262 (FLTA…IGGF), and 271–291 (ALKL…ILPL).

It belongs to the UbiA prenyltransferase family. Protoheme IX farnesyltransferase subfamily.

The protein resides in the cell membrane. The enzyme catalyses heme b + (2E,6E)-farnesyl diphosphate + H2O = Fe(II)-heme o + diphosphate. It functions in the pathway porphyrin-containing compound metabolism; heme O biosynthesis; heme O from protoheme: step 1/1. Converts heme B (protoheme IX) to heme O by substitution of the vinyl group on carbon 2 of heme B porphyrin ring with a hydroxyethyl farnesyl side group. The polypeptide is Protoheme IX farnesyltransferase (Aeropyrum pernix (strain ATCC 700893 / DSM 11879 / JCM 9820 / NBRC 100138 / K1)).